The chain runs to 549 residues: MKNSVGISIATIVAIIAAIYYVPWYEHFERKSPGAGEMRDRIESMFLESWRDYSKHGWGYDVYGPIEHTSHNMPRGNQPLGWIIVDSVDTLMLMYNSSTLYKSEFEAEIQRSEHWINDVLDFDIDAEVNVFETTIRMLGGLLSAYHLSDVLEVGNKTVYLNKAIDLGDRLALAFLSTQTGIPYSSINLHSGQAVKNHADGGASSTAEFTTLQMEFKYLAYLTGNRTYWELVERVYEPLYKNNDLLNTYDGLVPIYTFPDTGKFGASTIRFGSRGDSFYEYLLKQYLLTHETLYYDLYRKSMEGMKKHLLAQSKPSSLWYIGEREQGLHGQLSPKMDHLVCFMGGLLASGSTEGLSIHEARRRPFFSLSLERKSDWDLAKGITDTCYQMYKQSSSGLAPEIVVFNDGNIKQDGWWRSSVGDFFVKPLDRHNLQRPETVESIMFMYHLSHDHKYREWGAEIATSFFENTCVDCNDPKLRRFTSLSDCITLPTKKSNNMESFWLAETLKYLYILFLDEFDLTKVVFNTEAHPFPVLDEEILKSQSLTTGWSL.

The Cytoplasmic portion of the chain corresponds to 1 to 4 (MKNS). The chain crosses the membrane as a helical; Signal-anchor for type II membrane protein span at residues 5–24 (VGISIATIVAIIAAIYYVPW). Residues 25-354 (YEHFERKSPG…LLASGSTEGL (330 aa)) are Lumenal-facing. N-linked (GlcNAc...) asparagine glycosylation is found at Asn96, Asn155, and Asn224. Residues Cys340 and Cys385 are joined by a disulfide bond. Catalysis depends on Glu399, which acts as the Proton donor. Cys468 and Cys471 are joined by a disulfide. Thr525 serves as a coordination point for Ca(2+).

The protein belongs to the glycosyl hydrolase 47 family. In terms of assembly, homodimer. Ca(2+) is required as a cofactor.

It is found in the endoplasmic reticulum membrane. It catalyses the reaction N(4)-(alpha-D-Man-(1-&gt;2)-alpha-D-Man-(1-&gt;2)-alpha-D-Man-(1-&gt;3)-[alpha-D-Man-(1-&gt;2)-alpha-D-Man-(1-&gt;3)-[alpha-D-Man-(1-&gt;2)-alpha-D-Man-(1-&gt;6)]-alpha-D-Man-(1-&gt;6)]-beta-D-Man-(1-&gt;4)-beta-D-GlcNAc-(1-&gt;4)-beta-D-GlcNAc)-L-asparaginyl-[protein] (N-glucan mannose isomer 9A1,2,3B1,2,3) + 4 H2O = N(4)-(alpha-D-Man-(1-&gt;3)-[alpha-D-Man-(1-&gt;3)-[alpha-D-Man-(1-&gt;6)]-alpha-D-Man-(1-&gt;6)]-beta-D-Man-(1-&gt;4)-beta-D-GlcNAc-(1-&gt;4)-beta-D-GlcNAc)-L-asparaginyl-[protein] (N-glucan mannose isomer 5A1,2) + 4 beta-D-mannose. It carries out the reaction N(4)-(alpha-D-Man-(1-&gt;2)-alpha-D-Man-(1-&gt;2)-alpha-D-Man-(1-&gt;3)-[alpha-D-Man-(1-&gt;3)-[alpha-D-Man-(1-&gt;2)-alpha-D-Man-(1-&gt;6)]-alpha-D-Man-(1-&gt;6)]-beta-D-Man-(1-&gt;4)-beta-D-GlcNAc-(1-&gt;4)-beta-D-GlcNAc)-L-asparaginyl-[protein] (N-glucan mannose isomer 8A1,2,3B1,3) + 3 H2O = N(4)-(alpha-D-Man-(1-&gt;3)-[alpha-D-Man-(1-&gt;3)-[alpha-D-Man-(1-&gt;6)]-alpha-D-Man-(1-&gt;6)]-beta-D-Man-(1-&gt;4)-beta-D-GlcNAc-(1-&gt;4)-beta-D-GlcNAc)-L-asparaginyl-[protein] (N-glucan mannose isomer 5A1,2) + 3 beta-D-mannose. It functions in the pathway protein modification; protein glycosylation. Its function is as follows. Involved in glycoprotein quality control as it is important for the targeting of misfolded glycoproteins for degradation. It primarily trims a single alpha-1,2-linked mannose residue from Man(9)GlcNAc(2) to produce Man(8)GlcNAc(2), but at high enzyme concentrations it further trims the carbohydrates to Man(5)GlcNAc(2). The protein is Endoplasmic reticulum mannosyl-oligosaccharide 1,2-alpha-mannosidase (MNS1) of Saccharomyces cerevisiae (strain ATCC 204508 / S288c) (Baker's yeast).